A 410-amino-acid polypeptide reads, in one-letter code: Adenosine receptor A2a (410 aa).

The Extracellular segment spans residues 1-4; the sequence is MGSS. Residues 5–29 traverse the membrane as a helical segment; the sequence is VYITVELAIAVLAILGNVLVCWAVW. The Cytoplasmic segment spans residues 30–39; that stretch reads INSNLQNVTN. A helical transmembrane segment spans residues 40-63; the sequence is FFVVSLAAADIAVGVLAIPFAITI. Topologically, residues 64–74 are extracellular; that stretch reads STGFCAACHGC. Disulfide bonds link Cys68/Cys154, Cys71/Cys143, and Cys74/Cys161. Residues 75–97 traverse the membrane as a helical segment; it reads LFFACFVLVLTQSSIFSLLAIAI. Residues 98–117 are Cytoplasmic-facing; sequence DRYIAIRIPLRYNGLVTGVR. The helical transmembrane segment at 118 to 140 threads the bilayer; sequence AKGIIAICWVLSFAIGLTPMLGW. Over 141 to 168 the chain is Extracellular; the sequence is NNCSQKDGNSTKTCGEGRVTCLFEDVVP. Residues Asn142 and Asn149 are each glycosylated (N-linked (GlcNAc...) asparagine). Glu164 contributes to the adenosine binding site. The helical transmembrane segment at 169 to 193 threads the bilayer; it reads MNYMVYYNFFAFVLLPLLLMLAIYL. Residues 194-229 lie on the Cytoplasmic side of the membrane; that stretch reads RIFLAARRQLKQMESQPLPGERTRSTLQKEVHAAKS. The helical transmembrane segment at 230 to 253 threads the bilayer; it reads LAIIVGLFALCWLPLHIINCFTFF. Adenosine is bound at residue Asn248. Cys254 and Cys257 are joined by a disulfide. Residues 254–261 lie on the Extracellular side of the membrane; it reads CSTCRHAP. The helical transmembrane segment at 262–285 threads the bilayer; sequence PWLMYLAIILSHSNSVVNPFIYAY. The adenosine site is built by Ser272 and His273. Residues 286 to 410 lie on the Cytoplasmic side of the membrane; that stretch reads RIREFRQTFR…SSWSSEFAPS (125 aa). Positions 322 to 410 are interaction with GAS2L2; it reads HSTEGEQVSL…SSWSSEFAPS (89 aa). Residues 344-410 are disordered; sequence GSATHSGRRP…SSWSSEFAPS (67 aa). Positions 371-388 are enriched in basic and acidic residues; that stretch reads RDVELPTQERQEGQEHPG. Polar residues predominate over residues 401 to 410; the sequence is SSWSSEFAPS.

Belongs to the G-protein coupled receptor 1 family. In terms of assembly, interacts (via cytoplasmic C-terminal domain) with USP4; the interaction is direct. May interact with DRD4. Interacts with NECAB2. Interacts (via cytoplasmic C-terminal domain) with GAS2L2; interaction enhances receptor-mediated adenylyl cyclase activity. Ubiquitinated. Deubiquitinated by USP4; leading to stabilization and expression at the cell surface. Expressed in striatal neurons (at protein level).

The protein localises to the cell membrane. Receptor for adenosine. The activity of this receptor is mediated by G proteins which activate adenylyl cyclase. The protein is Adenosine receptor A2a (Adora2a) of Rattus norvegicus (Rat).